Reading from the N-terminus, the 161-residue chain is Ribonuclease P protein component 2 (161 aa).

It belongs to the eukaryotic/archaeal RNase P protein component 2 family. Consists of a catalytic RNA component and at least 4-5 protein subunits.

Its subcellular location is the cytoplasm. The enzyme catalyses Endonucleolytic cleavage of RNA, removing 5'-extranucleotides from tRNA precursor.. In terms of biological role, part of ribonuclease P, a protein complex that generates mature tRNA molecules by cleaving their 5'-ends. The protein is Ribonuclease P protein component 2 of Haloarcula marismortui (strain ATCC 43049 / DSM 3752 / JCM 8966 / VKM B-1809) (Halobacterium marismortui).